Here is a 202-residue protein sequence, read N- to C-terminus: MAGSFAQLAKNAEKKKPSISVSKEPVENPPLKVYQLGDEALRTPANRIVKVDDAIRKLAKDMLITMYSSKGIGLAAPQVGIQKRLLVIDLNFEDPNSPPMVFINPEIISSSATVDTYEEGCLSIPGVYLNVLRPSSIKLSYRDEMGRPKKMNADGLMARCIQHEIDHLNGVCFVDKVTDEEELKKQLNENNFKRSDVIKATN.

A disordered region spans residues 1-24 (MAGSFAQLAKNAEKKKPSISVSKE). Residues cysteine 121 and histidine 163 each contribute to the Fe cation site. The active site involves glutamate 164. Histidine 167 is a Fe cation binding site.

Belongs to the polypeptide deformylase family. Requires Fe(2+) as cofactor.

The enzyme catalyses N-terminal N-formyl-L-methionyl-[peptide] + H2O = N-terminal L-methionyl-[peptide] + formate. Its function is as follows. Removes the formyl group from the N-terminal Met of newly synthesized proteins. Requires at least a dipeptide for an efficient rate of reaction. N-terminal L-methionine is a prerequisite for activity but the enzyme has broad specificity at other positions. The polypeptide is Peptide deformylase (Prochlorococcus marinus (strain NATL1A)).